Here is a 408-residue protein sequence, read N- to C-terminus: Succinylornithine transaminase (408 aa).

K252 carries the post-translational modification N6-(pyridoxal phosphate)lysine.

It belongs to the class-III pyridoxal-phosphate-dependent aminotransferase family. AstC subfamily. Pyridoxal 5'-phosphate serves as cofactor.

The catalysed reaction is N(2)-succinyl-L-ornithine + 2-oxoglutarate = N-succinyl-L-glutamate 5-semialdehyde + L-glutamate. The protein operates within amino-acid degradation; L-arginine degradation via AST pathway; L-glutamate and succinate from L-arginine: step 3/5. Catalyzes the transamination of N(2)-succinylornithine and alpha-ketoglutarate into N(2)-succinylglutamate semialdehyde and glutamate. Can also act as an acetylornithine aminotransferase. This is Succinylornithine transaminase from Salmonella choleraesuis (strain SC-B67).